Consider the following 545-residue polypeptide: CTP synthase (545 aa).

Residues 1–266 (MITNYIFVTG…DQYICDKFNL (266 aa)) form an amidoligase domain region. Ser14 contributes to the CTP binding site. UTP is bound at residue Ser14. ATP is bound by residues 15-20 (SLGKGI) and Asp72. 2 residues coordinate Mg(2+): Asp72 and Glu140. CTP is bound by residues 147-149 (DIE), 187-192 (KTKPTQ), and Lys223. UTP contacts are provided by residues 187 to 192 (KTKPTQ) and Lys223. 239–241 (KDV) contributes to the ATP binding site. One can recognise a Glutamine amidotransferase type-1 domain in the interval 291 to 542 (SIGMVGKYIE…VKSALAHHQD (252 aa)). Gly352 contributes to the L-glutamine binding site. The Nucleophile; for glutamine hydrolysis role is filled by Cys379. L-glutamine-binding positions include 380 to 383 (LGMQ), Glu403, and Arg470. Residues His515 and Glu517 contribute to the active site.

It belongs to the CTP synthase family. Homotetramer.

The catalysed reaction is UTP + L-glutamine + ATP + H2O = CTP + L-glutamate + ADP + phosphate + 2 H(+). It catalyses the reaction L-glutamine + H2O = L-glutamate + NH4(+). The enzyme catalyses UTP + NH4(+) + ATP = CTP + ADP + phosphate + 2 H(+). It functions in the pathway pyrimidine metabolism; CTP biosynthesis via de novo pathway; CTP from UDP: step 2/2. With respect to regulation, allosterically activated by GTP, when glutamine is the substrate; GTP has no effect on the reaction when ammonia is the substrate. The allosteric effector GTP functions by stabilizing the protein conformation that binds the tetrahedral intermediate(s) formed during glutamine hydrolysis. Inhibited by the product CTP, via allosteric rather than competitive inhibition. Catalyzes the ATP-dependent amination of UTP to CTP with either L-glutamine or ammonia as the source of nitrogen. Regulates intracellular CTP levels through interactions with the four ribonucleotide triphosphates. The protein is CTP synthase of Hamiltonella defensa subsp. Acyrthosiphon pisum (strain 5AT).